Reading from the N-terminus, the 397-residue chain is Mannonate dehydratase (397 aa).

It belongs to the mannonate dehydratase family. Fe(2+) is required as a cofactor. It depends on Mn(2+) as a cofactor.

The enzyme catalyses D-mannonate = 2-dehydro-3-deoxy-D-gluconate + H2O. Its pathway is carbohydrate metabolism; pentose and glucuronate interconversion. Functionally, catalyzes the dehydration of D-mannonate. This Yersinia pestis bv. Antiqua (strain Angola) protein is Mannonate dehydratase.